We begin with the raw amino-acid sequence, 80 residues long: Acyl carrier protein (80 aa).

In terms of domain architecture, Carrier spans 2-77; that stretch reads SDIEQRVKKI…QAIDYAKAHV (76 aa). Serine 37 is subject to O-(pantetheine 4'-phosphoryl)serine.

Belongs to the acyl carrier protein (ACP) family. In terms of processing, 4'-phosphopantetheine is transferred from CoA to a specific serine of apo-ACP by AcpS. This modification is essential for activity because fatty acids are bound in thioester linkage to the sulfhydryl of the prosthetic group.

It is found in the cytoplasm. The protein operates within lipid metabolism; fatty acid biosynthesis. Functionally, carrier of the growing fatty acid chain in fatty acid biosynthesis. In Herminiimonas arsenicoxydans, this protein is Acyl carrier protein.